The following is a 121-amino-acid chain: uncharacterized protein (121 aa).

This is an uncharacterized protein from Methanocaldococcus jannaschii (strain ATCC 43067 / DSM 2661 / JAL-1 / JCM 10045 / NBRC 100440) (Methanococcus jannaschii).